We begin with the raw amino-acid sequence, 183 residues long: Bifunctional protein PyrR (183 aa).

Residues 46-47 (TR), Arg87, 107-115 (DDVIFSGRT), Arg140, and Val164 each bind substrate. A PRPP-binding motif is present at residues 103–115 (VVLVDDVIFSGRT).

This sequence belongs to the purine/pyrimidine phosphoribosyltransferase family. PyrR subfamily.

It carries out the reaction UMP + diphosphate = 5-phospho-alpha-D-ribose 1-diphosphate + uracil. Its function is as follows. Regulates the transcription of the pyrimidine nucleotide (pyr) operon in response to exogenous pyrimidines. In terms of biological role, also displays a weak uracil phosphoribosyltransferase activity which is not physiologically significant. This Thermosynechococcus vestitus (strain NIES-2133 / IAM M-273 / BP-1) protein is Bifunctional protein PyrR.